Reading from the N-terminus, the 279-residue chain is 4-diphosphocytidyl-2-C-methyl-D-erythritol kinase (279 aa).

The active site involves Lys-10. Position 91 to 101 (91 to 101 (PVASGIGGGSA)) interacts with ATP. Residue Asp-130 is part of the active site.

This sequence belongs to the GHMP kinase family. IspE subfamily.

It catalyses the reaction 4-CDP-2-C-methyl-D-erythritol + ATP = 4-CDP-2-C-methyl-D-erythritol 2-phosphate + ADP + H(+). It participates in isoprenoid biosynthesis; isopentenyl diphosphate biosynthesis via DXP pathway; isopentenyl diphosphate from 1-deoxy-D-xylulose 5-phosphate: step 3/6. Functionally, catalyzes the phosphorylation of the position 2 hydroxy group of 4-diphosphocytidyl-2C-methyl-D-erythritol. The sequence is that of 4-diphosphocytidyl-2-C-methyl-D-erythritol kinase from Ruegeria pomeroyi (strain ATCC 700808 / DSM 15171 / DSS-3) (Silicibacter pomeroyi).